The chain runs to 305 residues: Transmembrane epididymal protein 1A (305 aa).

A helical transmembrane segment spans residues 4–24 (FIGHISPGLFLVFYGLYQAVI). The N-linked (GlcNAc...) asparagine glycan is linked to Asn-32. A run of 5 helical transmembrane segments spans residues 54–74 (IAHA…YEIS), 124–144 (CVLL…LLLV), 159–179 (SLLI…LWAP), 187–207 (IETF…FILF), and 223–243 (IMFV…CMLG). Residues 285-305 (EQQDKDDQAPLLSKISPCDRA) form a disordered region.

It belongs to the TMEM45 family.

The protein resides in the membrane. The chain is Transmembrane epididymal protein 1A from Mus musculus (Mouse).